Here is a 65-residue protein sequence, read N- to C-terminus: Large ribosomal subunit protein uL29 (65 aa).

This sequence belongs to the universal ribosomal protein uL29 family.

In Buchnera aphidicola subsp. Acyrthosiphon pisum (strain APS) (Acyrthosiphon pisum symbiotic bacterium), this protein is Large ribosomal subunit protein uL29 (rpmC).